We begin with the raw amino-acid sequence, 143 residues long: Large ribosomal subunit protein uL22c (143 aa).

Belongs to the universal ribosomal protein uL22 family. As to quaternary structure, part of the 50S ribosomal subunit.

The protein localises to the plastid. It localises to the chloroplast. Functionally, this protein binds specifically to 23S rRNA. The globular domain of the protein is located near the polypeptide exit tunnel on the outside of the subunit, while an extended beta-hairpin is found that lines the wall of the exit tunnel in the center of the 70S ribosome. This is Large ribosomal subunit protein uL22c (rpl22) from Piper cenocladum (Ant piper).